Consider the following 661-residue polypeptide: FAST kinase domain-containing protein 3, mitochondrial (661 aa).

The RAP domain occupies 592–650 (VALCIDGPQRFCLDSKHLLGKEATKQRHLRLLGYQVVQLPYHELELLTSRLELVDYLQR).

This sequence belongs to the FAST kinase family. In terms of tissue distribution, expression detected in spleen, testis, colon, heart, smooth muscle, kidney, brain, lung, liver, brown and white adipose tissue with highest expression in testis and smooth muscle.

It localises to the mitochondrion. In terms of biological role, required for normal mitochondrial respiration. Increases steady-state levels and half-lives of a subset of mature mitochondrial mRNAs MT-ND2, MT-ND3, MT-CYTB, MT-CO2, and MT-ATP8/6. Promotes MT-CO1 mRNA translation and increases mitochondrial complex IV assembly and activity. In Mus musculus (Mouse), this protein is FAST kinase domain-containing protein 3, mitochondrial (Fastkd3).